The chain runs to 458 residues: ATP synthase subunit beta (458 aa).

Position 148–155 (148–155 (GGAGVGKT)) interacts with ATP.

It belongs to the ATPase alpha/beta chains family. F-type ATPases have 2 components, CF(1) - the catalytic core - and CF(0) - the membrane proton channel. CF(1) has five subunits: alpha(3), beta(3), gamma(1), delta(1), epsilon(1). CF(0) has three main subunits: a(1), b(2) and c(9-12). The alpha and beta chains form an alternating ring which encloses part of the gamma chain. CF(1) is attached to CF(0) by a central stalk formed by the gamma and epsilon chains, while a peripheral stalk is formed by the delta and b chains.

It localises to the cell inner membrane. The enzyme catalyses ATP + H2O + 4 H(+)(in) = ADP + phosphate + 5 H(+)(out). Its function is as follows. Produces ATP from ADP in the presence of a proton gradient across the membrane. The catalytic sites are hosted primarily by the beta subunits. This is ATP synthase subunit beta from Pseudomonas putida (strain ATCC 700007 / DSM 6899 / JCM 31910 / BCRC 17059 / LMG 24140 / F1).